The sequence spans 283 residues: 4-hydroxy-3-methylbut-2-enyl diphosphate reductase (283 aa).

Cys-12 serves as a coordination point for [4Fe-4S] cluster. His-40 and His-73 together coordinate (2E)-4-hydroxy-3-methylbut-2-enyl diphosphate. Dimethylallyl diphosphate contacts are provided by His-40 and His-73. Residues His-40 and His-73 each coordinate isopentenyl diphosphate. Cys-95 serves as a coordination point for [4Fe-4S] cluster. His-123 contributes to the (2E)-4-hydroxy-3-methylbut-2-enyl diphosphate binding site. Position 123 (His-123) interacts with dimethylallyl diphosphate. His-123 lines the isopentenyl diphosphate pocket. Glu-125 functions as the Proton donor in the catalytic mechanism. A (2E)-4-hydroxy-3-methylbut-2-enyl diphosphate-binding site is contributed by Thr-161. Cys-189 lines the [4Fe-4S] cluster pocket. Residues Ser-217, Asn-219, and Ser-261 each contribute to the (2E)-4-hydroxy-3-methylbut-2-enyl diphosphate site. Dimethylallyl diphosphate is bound by residues Ser-217, Asn-219, and Ser-261. 3 residues coordinate isopentenyl diphosphate: Ser-217, Asn-219, and Ser-261.

This sequence belongs to the IspH family. The cofactor is [4Fe-4S] cluster.

The enzyme catalyses isopentenyl diphosphate + 2 oxidized [2Fe-2S]-[ferredoxin] + H2O = (2E)-4-hydroxy-3-methylbut-2-enyl diphosphate + 2 reduced [2Fe-2S]-[ferredoxin] + 2 H(+). It catalyses the reaction dimethylallyl diphosphate + 2 oxidized [2Fe-2S]-[ferredoxin] + H2O = (2E)-4-hydroxy-3-methylbut-2-enyl diphosphate + 2 reduced [2Fe-2S]-[ferredoxin] + 2 H(+). It participates in isoprenoid biosynthesis; dimethylallyl diphosphate biosynthesis; dimethylallyl diphosphate from (2E)-4-hydroxy-3-methylbutenyl diphosphate: step 1/1. It functions in the pathway isoprenoid biosynthesis; isopentenyl diphosphate biosynthesis via DXP pathway; isopentenyl diphosphate from 1-deoxy-D-xylulose 5-phosphate: step 6/6. Catalyzes the conversion of 1-hydroxy-2-methyl-2-(E)-butenyl 4-diphosphate (HMBPP) into a mixture of isopentenyl diphosphate (IPP) and dimethylallyl diphosphate (DMAPP). Acts in the terminal step of the DOXP/MEP pathway for isoprenoid precursor biosynthesis. The polypeptide is 4-hydroxy-3-methylbut-2-enyl diphosphate reductase (Geobacter sp. (strain M21)).